The primary structure comprises 65 residues: Defensin-B3 (65 aa).

The N-terminal stretch at 1-21 (MRLLLVFFFLSLLDQAPPARS) is a signal peptide. 3 disulfides stabilise this stretch: Cys29/Cys58, Cys36/Cys50, and Cys40/Cys59. Positions 62–65 (ESPR) are excised as a propeptide.

It belongs to the beta-defensin family. As to expression, lowly expressed in spleen, and expressed at lower levels in kidney, lung and testis.

It is found in the secreted. Has antimicrobial activity. The protein is Defensin-B3 of Ornithorhynchus anatinus (Duckbill platypus).